The sequence spans 192 residues: Ubiquitin-conjugating enzyme E2 T (192 aa).

The 151-residue stretch at 2–152 (QRVSRLKREL…AKKWTEKHAL (151 aa)) folds into the UBC core domain. Cys-86 functions as the Glycyl thioester intermediate in the catalytic mechanism. The segment at 150–192 (HALPAPQGSDKESQEKSGSSEGTSHKRKSAEIAEESKKPCREP) is disordered. A compositionally biased stretch (basic and acidic residues) spans 178–192 (SAEIAEESKKPCREP).

This sequence belongs to the ubiquitin-conjugating enzyme family.

Its subcellular location is the nucleus. It catalyses the reaction S-ubiquitinyl-[E1 ubiquitin-activating enzyme]-L-cysteine + [E2 ubiquitin-conjugating enzyme]-L-cysteine = [E1 ubiquitin-activating enzyme]-L-cysteine + S-ubiquitinyl-[E2 ubiquitin-conjugating enzyme]-L-cysteine.. It participates in protein modification; protein ubiquitination. Functionally, accepts ubiquitin from the E1 complex and catalyzes its covalent attachment to other proteins. Catalyzes monoubiquitination. Involved in DNA repair. The polypeptide is Ubiquitin-conjugating enzyme E2 T (ube2t) (Xenopus laevis (African clawed frog)).